The following is a 245-amino-acid chain: Adapter protein MecA (245 aa).

It belongs to the MecA family. In terms of assembly, homodimer.

Enables the recognition and targeting of unfolded and aggregated proteins to the ClpC protease or to other proteins involved in proteolysis. In Streptococcus pneumoniae serotype 4 (strain ATCC BAA-334 / TIGR4), this protein is Adapter protein MecA.